A 457-amino-acid polypeptide reads, in one-letter code: Multidrug resistance protein MdtK (457 aa).

The next 12 membrane-spanning stretches (helical) occupy residues 11–31 (LLAL…MGFV), 53–73 (IWLP…PVIA), 93–113 (WLAG…GYII), 127–147 (AVGY…FQVA), 160–180 (GMVM…IFIY), 189–209 (GGVG…LAMV), 243–263 (LPIA…ALLV), 276–296 (IALN…AAVT), 314–334 (AART…IFTV), 350–370 (VVTL…SDSI), 387–407 (IFYI…YILA), and 418–438 (PAGF…MMML).

Belongs to the multi antimicrobial extrusion (MATE) (TC 2.A.66.1) family. MdtK subfamily.

It localises to the cell inner membrane. Multidrug efflux pump that functions probably as a Na(+)/drug antiporter. The polypeptide is Multidrug resistance protein MdtK (Escherichia coli O45:K1 (strain S88 / ExPEC)).